Consider the following 318-residue polypeptide: Thymidylate synthase (318 aa).

Residues arginine 25 and 180–181 (RR) contribute to the dUMP site. The Nucleophile role is filled by cysteine 200. DUMP is bound by residues 220–223 (RSGD), asparagine 231, and 261–263 (HIY). Position 223 (aspartate 223) interacts with (6R)-5,10-methylene-5,6,7,8-tetrahydrofolate. Alanine 317 serves as a coordination point for (6R)-5,10-methylene-5,6,7,8-tetrahydrofolate.

The protein belongs to the thymidylate synthase family. Bacterial-type ThyA subfamily. As to quaternary structure, homodimer.

It localises to the cytoplasm. The catalysed reaction is dUMP + (6R)-5,10-methylene-5,6,7,8-tetrahydrofolate = 7,8-dihydrofolate + dTMP. Its pathway is pyrimidine metabolism; dTTP biosynthesis. Its function is as follows. Catalyzes the reductive methylation of 2'-deoxyuridine-5'-monophosphate (dUMP) to 2'-deoxythymidine-5'-monophosphate (dTMP) while utilizing 5,10-methylenetetrahydrofolate (mTHF) as the methyl donor and reductant in the reaction, yielding dihydrofolate (DHF) as a by-product. This enzymatic reaction provides an intracellular de novo source of dTMP, an essential precursor for DNA biosynthesis. The sequence is that of Thymidylate synthase from Bacillus cereus (strain ZK / E33L).